The primary structure comprises 77 residues: U14-theraphotoxin-Cg1b (77 aa).

The N-terminal stretch at 1-21 (MKTSVLLVILGIAAITVQCTA) is a signal peptide. Residues 22–49 (SESVEQDSLRTFVDAVLGWNAEMASEAR) constitute a propeptide that is removed on maturation. Intrachain disulfides connect Cys-50/Cys-64, Cys-57/Cys-69, and Cys-63/Cys-75.

It belongs to the neurotoxin 10 (Hwtx-1) family. 65 (Jztx-21) subfamily. In terms of tissue distribution, expressed by the venom gland.

The protein resides in the secreted. In terms of biological role, probable ion channel inhibitor. This chain is U14-theraphotoxin-Cg1b, found in Chilobrachys guangxiensis (Chinese earth tiger tarantula).